The chain runs to 867 residues: Retinoblastoma-related protein 1 (867 aa).

Positions 275–476 (TPVTSAMTTA…EKGSSLYNSL (202 aa)) are domain A. The tract at residues 275–722 (TPVTSAMTTA…NEVFVPAAKP (448 aa)) is pocket; binds RPD3I and RBAP1. Residues 477 to 594 (IVARPSVASE…PVGGNEKCAD (118 aa)) form a spacer region. The segment at 512–563 (EGLPATPSKKRAAGPDDNADPRSPKRSCNESRNTVVERNLQTPPPKQSHMVS) is disordered. The segment covering 530-540 (ADPRSPKRSCN) has biased composition (basic and acidic residues). Positions 541-552 (ESRNTVVERNLQ) are enriched in polar residues. Residues 595–722 (VTIHIFFSKI…NEVFVPAAKP (128 aa)) are domain B. Disordered regions lie at residues 734 to 762 (PEDK…MSPK) and 843 to 867 (QING…ETDT).

It belongs to the retinoblastoma protein (RB) family. Interacts with RPD3I, RBAP1, the Arabidopsis cyclin CYCD3-1, the mastrevirus replication-associated protein A (RepA) and the begomovirus replication-associated protein (Rep). Ubiquitous.

Its subcellular location is the nucleus. Regulator of biological processes that recruits a histone deacetylase to control gene transcription. May play a role in the entry into mitosis, negatively regulating the cell proliferation. Formation of stable complexes with geminiviridae replication-associated proteins may create a cellular environment which favors viral DNA replication. In Zea mays (Maize), this protein is Retinoblastoma-related protein 1 (RBR1).